The following is a 337-amino-acid chain: Perakine reductase (337 aa).

The Proton donor role is filled by Y57. A substrate-binding site is contributed by H126. 205-214 contributes to the NADP(+) binding site; it reads SPIGRGLFAG.

The protein belongs to the aldo/keto reductase family.

The catalysed reaction is raucaffrinoline + NADP(+) = perakine + NADPH + H(+). Aldo-keto reductase involved in the biosynthesis of monoterpenoid indole alkaloids. Broad substrate specificity enzyme with a high selectivity in the group of alkaloids. Can use perakine, 19(S),20(R)-dihydro-peraksine-17,21-al, cinnamic aldehyde, p-coumaric aldehyde and 3-(3,4,5-trimethoxyphenyl)propanal as substrates, but not ketosteroids such as progesterone. NADPH could not be replaced by NADH. This Rauvolfia serpentina (Serpentine wood) protein is Perakine reductase (PR).